A 329-amino-acid polypeptide reads, in one-letter code: Malate dehydrogenase (329 aa).

Gly-13–Ser-19 lines the NAD(+) pocket. Substrate contacts are provided by Arg-94 and Arg-100. NAD(+) contacts are provided by residues Asn-107, Gln-114, and Val-131–Asn-133. Substrate-binding residues include Asn-133 and Arg-164. His-189 acts as the Proton acceptor in catalysis.

It belongs to the LDH/MDH superfamily. MDH type 2 family.

It carries out the reaction (S)-malate + NAD(+) = oxaloacetate + NADH + H(+). Catalyzes the reversible oxidation of malate to oxaloacetate. The sequence is that of Malate dehydrogenase from Psychrobacter cryohalolentis (strain ATCC BAA-1226 / DSM 17306 / VKM B-2378 / K5).